The following is a 459-amino-acid chain: Glutamyl-tRNA reductase (459 aa).

Residues 47–50, Ser-140, 145–147, and Gln-151 contribute to the substrate site; these read TCNR and EPQ. Residue Cys-48 is the Nucleophile of the active site. Residue 220-225 participates in NADP(+) binding; the sequence is AAGEMN.

Belongs to the glutamyl-tRNA reductase family. As to quaternary structure, homodimer.

It carries out the reaction (S)-4-amino-5-oxopentanoate + tRNA(Glu) + NADP(+) = L-glutamyl-tRNA(Glu) + NADPH + H(+). It participates in porphyrin-containing compound metabolism; protoporphyrin-IX biosynthesis; 5-aminolevulinate from L-glutamyl-tRNA(Glu): step 1/2. Catalyzes the NADPH-dependent reduction of glutamyl-tRNA(Glu) to glutamate 1-semialdehyde (GSA). The sequence is that of Glutamyl-tRNA reductase from Psychrobacter arcticus (strain DSM 17307 / VKM B-2377 / 273-4).